Reading from the N-terminus, the 349-residue chain is MSGWSHRHVLDLASFSRDDYATVLELAHRFRSMPVTGARKLPALQGRLVATLFFEPSTRTRSSFELAAKRLSADVQSFSPSSSSLSKGESLLDTARTYVAMGADVLVIRHRCTDVPAQLASELDQAGERTVVLNGGDGQHSHPSQGLLDLYTLAHHFDPRNSQLDALQGKRIVIVGDVVHSRVARSNLWALSACGADVVLCGPPSLVPDAFAAFLDAPPPGQASDPVRERGTVQISRSLDDCLSGADAVMTLRLQKERMTDHLLTNLDRYHRDFGLTHERLRRCAFSGPVLHPGPVNRGVEMSGGLLDDRSICLVEDQVRNGIPIRMALLYLMAASDPVAESSRASAPS.

Residues Arg59 and Thr60 each coordinate carbamoyl phosphate. Lys87 contacts L-aspartate. Residues Arg109, His142, and Gln145 each coordinate carbamoyl phosphate. L-aspartate is bound by residues Arg182 and Arg253. 2 residues coordinate carbamoyl phosphate: Gly294 and Pro295.

The protein belongs to the aspartate/ornithine carbamoyltransferase superfamily. ATCase family. As to quaternary structure, heterododecamer (2C3:3R2) of six catalytic PyrB chains organized as two trimers (C3), and six regulatory PyrI chains organized as three dimers (R2).

It carries out the reaction carbamoyl phosphate + L-aspartate = N-carbamoyl-L-aspartate + phosphate + H(+). Its pathway is pyrimidine metabolism; UMP biosynthesis via de novo pathway; (S)-dihydroorotate from bicarbonate: step 2/3. Its function is as follows. Catalyzes the condensation of carbamoyl phosphate and aspartate to form carbamoyl aspartate and inorganic phosphate, the committed step in the de novo pyrimidine nucleotide biosynthesis pathway. This Synechococcus sp. (strain CC9311) protein is Aspartate carbamoyltransferase catalytic subunit.